We begin with the raw amino-acid sequence, 211 residues long: Proteasome subunit beta (211 aa).

The propeptide at 1 to 9 (MSEAETLKG) is removed in mature form; by autocatalysis. The Nucleophile role is filled by threonine 10.

This sequence belongs to the peptidase T1B family. In terms of assembly, the 20S proteasome core is composed of 14 alpha and 14 beta subunits that assemble into four stacked heptameric rings, resulting in a barrel-shaped structure. The two inner rings, each composed of seven catalytic beta subunits, are sandwiched by two outer rings, each composed of seven alpha subunits. The catalytic chamber with the active sites is on the inside of the barrel. Has a gated structure, the ends of the cylinder being occluded by the N-termini of the alpha-subunits. Is capped at one or both ends by the proteasome regulatory ATPase, PAN.

The protein localises to the cytoplasm. It catalyses the reaction Cleavage of peptide bonds with very broad specificity.. With respect to regulation, the formation of the proteasomal ATPase PAN-20S proteasome complex, via the docking of the C-termini of PAN into the intersubunit pockets in the alpha-rings, triggers opening of the gate for substrate entry. Interconversion between the open-gate and close-gate conformations leads to a dynamic regulation of the 20S proteasome proteolysis activity. Its function is as follows. Component of the proteasome core, a large protease complex with broad specificity involved in protein degradation. The sequence is that of Proteasome subunit beta from Methanosphaerula palustris (strain ATCC BAA-1556 / DSM 19958 / E1-9c).